The primary structure comprises 209 residues: Probable phosphatase C1687.21 (209 aa).

His8 acts as the Tele-phosphohistidine intermediate in catalysis. The active-site Proton donor/acceptor is the Glu82.

It belongs to the phosphoglycerate mutase family. BPG-dependent PGAM subfamily.

It is found in the cytoplasm. Its subcellular location is the nucleus. The sequence is that of Probable phosphatase C1687.21 from Schizosaccharomyces pombe (strain 972 / ATCC 24843) (Fission yeast).